The chain runs to 800 residues: Putative antiporter subunit mnhA2 (800 aa).

Transmembrane regions (helical) follow at residues 1 to 21, 33 to 53, 78 to 98, 118 to 138, 167 to 187, 207 to 227, 241 to 261, 273 to 293, 300 to 320, 331 to 351, 387 to 407, 424 to 444, 472 to 492, 527 to 547, 595 to 615, 627 to 647, 651 to 671, 676 to 696, 712 to 732, and 768 to 788; these read MSLVYLLIAILVIMAMILLTS, IALTAPVIASIYFLLQVPSVI, GLSLMFSLIISLIGIAVFFYA, LFMFSMLGIVLADNTILMYVF, FMITVFGGLALLVGFIMLYIM, ALFIPMIIMFLLGAFTKSAQF, TPVSAYLHSATMVKAGIFLLL, YIYIVTFVGLITMLFGSITAL, GILAYSTISQLGMIMAMVGIG, IASIYVFVLFAALFHLMNHAI, LVMMIAALSMAGVPFLNGFLS, FSLISMIIIVCMGVIASIFTF, PWLFSLPSLILMVLVPVIFFV, GFNIPLLLTIIIILLGSVLAI, IIMTLGIFMVIIGYGYIRIGL, GPLEVILAIVTVIIGLSLIFI, LTMVILNGVIGFVVTLFFIAM, LALTQLVVETITTILFIVSFS, IIKISVSLMMALIVVSLIFIA, and LDTLFEGLVLIITGLGIYTLL.

This sequence belongs to the CPA3 antiporters (TC 2.A.63) subunit A family. As to quaternary structure, may form a heterooligomeric complex that consists of seven subunits: mnhA2, mnhB2, mnhC2, mnhD2, mnhE2, mnhF2 and mnhG2.

The protein localises to the cell membrane. The sequence is that of Putative antiporter subunit mnhA2 (mnhA2) from Staphylococcus aureus (strain MRSA252).